We begin with the raw amino-acid sequence, 184 residues long: Inactive cytochrome P450 monooxygenase lolP2 (184 aa).

Residues Gly-10–Leu-30 form a helical membrane-spanning segment. Residues Arg-161–Pro-184 are disordered. Residues Thr-163–Pro-172 show a composition bias toward basic residues. The span at Arg-173–Pro-184 shows a compositional bias: low complexity.

Belongs to the cytochrome P450 family.

Its subcellular location is the membrane. In terms of biological role, cytochrome P450 monooxygenase; part of the gene cluster that mediates the biosynthesis of loline alkaloids, potent insecticidal agents composed of a pyrrolizidine ring system and an uncommon ether bridge linking carbons 2 and 7. Lolines are structurally differentiated by the various modifications of the L-amino group and include norloline, loline, N-methylloline, N-acetylloline, N-acetylnorloline, and N-formylloline. The first committed step is the condensation of O-acetyl-L-homoserine (derived from L-aspartic acid) and L-proline, probably catalyzed by the gamma-type pyridoxal 5'-phosphate(PLP)-dependent enzyme lolC, to give the diamino diacid, NACPP. Ensuing cyclization, decarboxylation, and acetylation steps yield 1-exo-acetamidopyrrolizidine (AcAP). LolO is required for installation of the ether bridge upon the pathway intermediate, 1-exo-acetamidopyrrolizidine (AcAP). In sequential 2-oxoglutarate- and O(2)-consuming steps, lolO removes hydrogens from C2 and C7 of AcAP to form both carbon-oxygen bonds in N-acetylnorloline (NANL), the precursor to all other lolines. The enzymes lolD, lolE, lolF and lolT have also been proposed to be involved in the ether-bridge installation. Further processing of the exocyclic moiety of NANL by fungal N-acetamidase (LolN), methyltransferase (LolM), and cytochrome P450 (LolP) enzymes, with occasional involvement of a plant acetyltransferase, generates the other known lolines. LolN transforms NANL to norlonine which is monomethylated and dimethylated to respectively lonine and N-methyllonine (NML) by lolM. LolP catalyzes hydroxylation of the methyl group in N-methylloline (NML) and further oxygenation to N-formylloline (NFL). A plant acetyltransferase is responsible for the acetylation of loline to form N-acetylloline (NAL). LolA might interact with aspartate kinase to prevent feedback inhibition of its activity by these end products and thereby promote production of L-homoserine from L-aspartate. This is Inactive cytochrome P450 monooxygenase lolP2 from Epichloe uncinata (Endophyte fungus).